We begin with the raw amino-acid sequence, 57 residues long: Preprotein translocase subunit SecG (57 aa).

At M1–D33 the chain is on the cytoplasmic side. Residues P34–I55 traverse the membrane as a helical segment. At P56 to P57 the chain is on the extracellular side.

This sequence belongs to the SEC61-beta family. Component of the protein translocase complex. Heterotrimer consisting of alpha (SecY), beta (SecG) and gamma (SecE) subunits. Can form oligomers of the heterotrimer.

The protein resides in the cell membrane. In terms of biological role, involved in protein export. The function of the beta subunit is unknown, but it may be involved in stabilization of the trimeric complex. In Metallosphaera sedula (strain ATCC 51363 / DSM 5348 / JCM 9185 / NBRC 15509 / TH2), this protein is Preprotein translocase subunit SecG.